The chain runs to 1132 residues: MALKGPQTLEENIGSAAPTGPCGYLYAYVTHNFPIGEASLLGNGYPEAKVFSLPLLHGLTVESDFPLNVKAVHKKIDATTASVKLTSYHREAIVFHNTHLFQPIFQGKGLEKLCRESRELFGFSTFVEQQHKGTLWSPEACPQLPCANEIFMAVIVTEGFKERLYGGKLVPVPSQTTPVHIGEHQAFKIPLYDEDLFGPSRAQELCRFYNPDISRYLHDSIFTGIAQALRVKDVSTVIQASERQFVHDQYKIPKLVQAKDFPQCASRGTDGSTLMVIDSLVAELGMSYGLSFIEGPQDSCEVLNYDTWPIFENCETPDARLRALEVWHAEQALHIGAQLFAANSVLYLTRVAKLPQKNQRGDANMYNSFYLQHGLGYLSEATVKENGASAFKGVPVSALDGSSYTLQHLAYASSFSPHLLARMCYYLQFLPHHKNTNSQSYNVVDYVGTAAPSQMCDLCQGQCPAVCINTLFYRMKDRFPPVLSNVKRDPYVITGTAGTYNDLEILGNFATFREREEEGNPVEDAPKYTYWQLCQNITEKLASMGISEGGDALRTLIVDIPSFVKVFKGIDSTVEAELLKFINCMIKNNYNFRENIKSVHHILQFACNVYWQAPCPVFLTLYYKSLLTVIQDICLTSCMMYEQDNPAVGIVPSEWLKMHFQTMWTNFKGACFDKGAITGGELKIVHQSMFCDLFDTDAAIGGMFAPARMQVRIARAMLMVPKTIKIKNRIIFSNSTGAESIQAGFMKPASQRDSYIVGGPYMKFLNALHKTLFPSTKTSALYLWHKIGQTTKNPILPGVSGEHLTELCNYVKASSQAFEEINVLDLVPDTLTSYAKIKLNSSILRACGQTQFYATTLSCLSPVTQLVPAEEYPHVLGPVGLSSPDEYRVKVAGRSVTIVQSTLKQAVSTNGRLRPIITVPLVVNKYTGSNGNTNVFHCANLGYFSGRGVDRNLRPESVPFKKNNVSSMLRKRHVIMTPLVDRLVKRIVGINSGEFEAEAVKRSVQNVLEDRDNPNLPKTVVLELVKHLGSSCASLTEEDVIYYLGPYAVLGDEVLSLLSTVGQAGVPWTAEGVASVIQDIIDDCELQFVGPEEPCLIQGQSVVEELFPSPGVPSLTVGKKRKIASLLSDLDL.

A required for nuclear localization region spans residues 1103 to 1132; that stretch reads VEELFPSPGVPSLTVGKKRKIASLLSDLDL.

It belongs to the herpesviridae major DNA-binding protein family. In terms of assembly, homooligomers. Forms double-helical filaments necessary for the formation of replication compartments within the host nucleus. Interacts with the origin-binding protein. Interacts with the helicase primase complex; this interaction stimulates primer synthesis activity of the helicase-primase complex. Interacts with the DNA polymerase. Interacts with the alkaline exonuclease; this interaction increases its nuclease processivity.

The protein resides in the host nucleus. Plays several crucial roles in viral infection. Participates in the opening of the viral DNA origin to initiate replication by interacting with the origin-binding protein. May disrupt loops, hairpins and other secondary structures present on ssDNA to reduce and eliminate pausing of viral DNA polymerase at specific sites during elongation. Promotes viral DNA recombination by performing strand-transfer, characterized by the ability to transfer a DNA strand from a linear duplex to a complementary single-stranded DNA circle. Can also catalyze the renaturation of complementary single strands. Additionally, reorganizes the host cell nucleus, leading to the formation of prereplicative sites and replication compartments. This process is driven by the protein which can form double-helical filaments in the absence of DNA. The protein is Major DNA-binding protein of Human herpesvirus 8 type P (isolate GK18) (HHV-8).